A 632-amino-acid polypeptide reads, in one-letter code: tRNA uridine 5-carboxymethylaminomethyl modification enzyme MnmG (632 aa).

Residues 15-20, Val127, and Ser182 contribute to the FAD site; that span reads GAGHAG. Residue 276–290 coordinates NAD(+); sequence GARYCPSIEDKIVRF. Gln373 contributes to the FAD binding site.

Belongs to the MnmG family. In terms of assembly, homodimer. Heterotetramer of two MnmE and two MnmG subunits. It depends on FAD as a cofactor.

The protein resides in the cytoplasm. In terms of biological role, NAD-binding protein involved in the addition of a carboxymethylaminomethyl (cmnm) group at the wobble position (U34) of certain tRNAs, forming tRNA-cmnm(5)s(2)U34. This is tRNA uridine 5-carboxymethylaminomethyl modification enzyme MnmG from Enterococcus faecalis (strain ATCC 700802 / V583).